Reading from the N-terminus, the 143-residue chain is Small ribosomal subunit protein eS19y (143 aa).

Belongs to the eukaryotic ribosomal protein eS19 family.

The chain is Small ribosomal subunit protein eS19y (RPS19B) from Arabidopsis thaliana (Mouse-ear cress).